The chain runs to 486 residues: Photosystem II CP43 reaction center protein (486 aa).

The propeptide occupies 1 to 28 (MKVFVHGWQHKISHTRILYSLRRFYHVE). 5 consecutive transmembrane segments (helical) span residues 82–106 (LFEV…PHLA), 147–168 (LIGP…RDKN), 191–213 (KALF…RLIN), 268–288 (KPFA…LSYS), and 304–325 (WYNN…ASQA). Position 380 (Glu-380) interacts with [CaMn4O5] cluster. The chain crosses the membrane as a helical span at residues 460–484 (RARAAAAGFEKGINRENEAVLSMRP).

It belongs to the PsbB/PsbC family. PsbC subfamily. In terms of assembly, PSII is composed of 1 copy each of membrane proteins PsbA, PsbB, PsbC, PsbD, PsbE, PsbF, PsbH, PsbI, PsbJ, PsbK, PsbL, PsbM, PsbT, PsbX, PsbY, PsbZ, Psb30/Ycf12, at least 3 peripheral proteins of the oxygen-evolving complex and a large number of cofactors. It forms dimeric complexes. It depends on Binds multiple chlorophylls and provides some of the ligands for the Ca-4Mn-5O cluster of the oxygen-evolving complex. It may also provide a ligand for a Cl- that is required for oxygen evolution. PSII binds additional chlorophylls, carotenoids and specific lipids. as a cofactor.

The protein resides in the plastid. It is found in the chloroplast thylakoid membrane. In terms of biological role, one of the components of the core complex of photosystem II (PSII). It binds chlorophyll and helps catalyze the primary light-induced photochemical processes of PSII. PSII is a light-driven water:plastoquinone oxidoreductase, using light energy to abstract electrons from H(2)O, generating O(2) and a proton gradient subsequently used for ATP formation. The polypeptide is Photosystem II CP43 reaction center protein (Gracilaria tenuistipitata var. liui (Red alga)).